Consider the following 473-residue polypeptide: ATP synthase subunit beta (473 aa).

158 to 165 (GGAGVGKT) provides a ligand contact to ATP.

The protein belongs to the ATPase alpha/beta chains family. F-type ATPases have 2 components, CF(1) - the catalytic core - and CF(0) - the membrane proton channel. CF(1) has five subunits: alpha(3), beta(3), gamma(1), delta(1), epsilon(1). CF(0) has three main subunits: a(1), b(2) and c(9-12). The alpha and beta chains form an alternating ring which encloses part of the gamma chain. CF(1) is attached to CF(0) by a central stalk formed by the gamma and epsilon chains, while a peripheral stalk is formed by the delta and b chains.

The protein resides in the cell membrane. It catalyses the reaction ATP + H2O + 4 H(+)(in) = ADP + phosphate + 5 H(+)(out). Functionally, produces ATP from ADP in the presence of a proton gradient across the membrane. The catalytic sites are hosted primarily by the beta subunits. The polypeptide is ATP synthase subunit beta (Geobacillus kaustophilus (strain HTA426)).